A 231-amino-acid chain; its full sequence is Ribose-5-phosphate isomerase A (231 aa).

Substrate is bound by residues 40–43 (TGST), 93–96 (DGAD), and 106–109 (KGGG). The active-site Proton acceptor is Glu115. Lys133 contributes to the substrate binding site.

The protein belongs to the ribose 5-phosphate isomerase family. Homodimer.

It carries out the reaction aldehydo-D-ribose 5-phosphate = D-ribulose 5-phosphate. The protein operates within carbohydrate degradation; pentose phosphate pathway; D-ribose 5-phosphate from D-ribulose 5-phosphate (non-oxidative stage): step 1/1. Catalyzes the reversible conversion of ribose-5-phosphate to ribulose 5-phosphate. The chain is Ribose-5-phosphate isomerase A from Escherichia coli O6:K15:H31 (strain 536 / UPEC).